A 458-amino-acid polypeptide reads, in one-letter code: Zinc finger protein 239 (458 aa).

Lysine 108 is covalently cross-linked (Glycyl lysine isopeptide (Lys-Gly) (interchain with G-Cter in SUMO2)). Serine 191 carries the post-translational modification Phosphoserine. C2H2-type zinc fingers lie at residues 207 to 229 (YECS…QRDH), 235 to 257 (YKCE…QAVH), 263 to 285 (YKCD…HAVH), 291 to 313 (YKCD…QRVH), 319 to 341 (YECE…QRVH), 347 to 369 (YKCG…RCIH), 375 to 397 (YQCY…LRVH), 403 to 425 (YHCG…QRVH), and 431 to 453 (YECS…QRVH).

The protein belongs to the krueppel C2H2-type zinc-finger protein family.

The protein localises to the nucleus. May be involved in transcriptional regulation. This is Zinc finger protein 239 (ZNF239) from Pongo abelii (Sumatran orangutan).